Reading from the N-terminus, the 190-residue chain is MDNQFIFKYSWETLPKKWVKKMERSEHGNRFDTNTDYLFQLLCFLKLHTYTRVQVLIDICGVDYPSRKRRFEVVYNLLSTRYNSRIRVQTSADEVTRISSVVSLFPSAGWWEREVWDMFGVSFINHPDLRRILTDYGFEGHPLRKDFPLSGYVEVRYDDPEKRVVSEPIEMTQEFRYFDFASPWEQRSDG.

Belongs to the complex I 30 kDa subunit family. In terms of assembly, complex I is composed of at least 49 different subunits. This is a component of the iron-sulfur (IP) fragment of the enzyme.

The protein resides in the mitochondrion inner membrane. The catalysed reaction is a ubiquinone + NADH + 5 H(+)(in) = a ubiquinol + NAD(+) + 4 H(+)(out). In terms of biological role, core subunit of the mitochondrial membrane respiratory chain NADH dehydrogenase (Complex I) that is believed to belong to the minimal assembly required for catalysis. Complex I functions in the transfer of electrons from NADH to the respiratory chain. The immediate electron acceptor for the enzyme is believed to be ubiquinone. This chain is NADH dehydrogenase [ubiquinone] iron-sulfur protein 3 (NAD9), found in Arabidopsis thaliana (Mouse-ear cress).